The following is a 290-amino-acid chain: Nucleotide-binding protein BPP4038 (290 aa).

9–16 contacts ATP; that stretch reads GISGSGKS. 58 to 61 provides a ligand contact to GTP; the sequence is DVRS.

The protein belongs to the RapZ-like family.

Its function is as follows. Displays ATPase and GTPase activities. The chain is Nucleotide-binding protein BPP4038 from Bordetella parapertussis (strain 12822 / ATCC BAA-587 / NCTC 13253).